The chain runs to 418 residues: Glutamyl-tRNA reductase (418 aa).

Residues 49–52 (TCNR), Ser109, 114–116 (EPQ), and Gln120 each bind substrate. Cys50 (nucleophile) is an active-site residue. An NADP(+)-binding site is contributed by 189 to 194 (GAGETI).

Belongs to the glutamyl-tRNA reductase family. As to quaternary structure, homodimer.

The catalysed reaction is (S)-4-amino-5-oxopentanoate + tRNA(Glu) + NADP(+) = L-glutamyl-tRNA(Glu) + NADPH + H(+). It participates in porphyrin-containing compound metabolism; protoporphyrin-IX biosynthesis; 5-aminolevulinate from L-glutamyl-tRNA(Glu): step 1/2. Its function is as follows. Catalyzes the NADPH-dependent reduction of glutamyl-tRNA(Glu) to glutamate 1-semialdehyde (GSA). The sequence is that of Glutamyl-tRNA reductase from Shigella flexneri.